Consider the following 138-residue polypeptide: Superoxide dismutase [Mn] (138 aa).

Mn(2+) is bound by residues histidine 2, histidine 49, aspartate 133, and histidine 137.

Belongs to the iron/manganese superoxide dismutase family. Requires Mn(2+) as cofactor.

It catalyses the reaction 2 superoxide + 2 H(+) = H2O2 + O2. Functionally, destroys superoxide anion radicals which are normally produced within the cells and which are toxic to biological systems. The protein is Superoxide dismutase [Mn] (sodA) of Mycolicibacterium phlei (Mycobacterium phlei).